A 188-amino-acid polypeptide reads, in one-letter code: Acyl-acyl carrier protein thioesterase ATL2, chloroplastic (188 aa).

Residues 1-47 (MFQATSTGAQIMHAAFPRSWRRGHVLPLRSAKIFKPLACLELRGSTG) constitute a chloroplast transit peptide. Residue Asp64 is part of the active site.

Belongs to the 4-hydroxybenzoyl-CoA thioesterase family. Expressed in endodermal and peridermal cells in young and mature roots, in boundaries of stem lateral organs and developing seeds.

It is found in the plastid. The protein resides in the chloroplast. Its function is as follows. Acyl-ACP thioesterase involved in the production of fatty acids and beta-keto fatty acids. Can produce beta-keto fatty acids of medium chain (8:0 and 10:0) and small amounts of 8:0 fatty acid when expressed in a heterologous organism (E.coli). May play a role in suberin biosynthesis. This Arabidopsis thaliana (Mouse-ear cress) protein is Acyl-acyl carrier protein thioesterase ATL2, chloroplastic.